Here is a 186-residue protein sequence, read N- to C-terminus: Nuclear transcription factor Y subunit B-1 (186 aa).

The tract at residues 1–24 (MAGNKKRGGRNMDQVKKAAVRSDG) is disordered. The DNA-binding element occupies 34-40 (LPMANLV). The segment at 61–72 (THDCAVEFVGFV) is subunit association domain (SAD). The tract at residues 123–142 (GGNRRVAPPPPAAATPLTPG) is disordered.

This sequence belongs to the NFYB/HAP3 subunit family. In terms of assembly, heterotrimeric transcription factor composed of three components, NF-YA, NF-YB and NF-YC. NF-YB and NF-YC must interact and dimerize for NF-YA association and DNA binding. Interacts with MADS18. Forms a ternary complex with the MADS6-MADS18 heterodimer. As to expression, expressed in developing kernels.

It is found in the nucleus. Functionally, component of the NF-Y/HAP transcription factor complex. The NF-Y complex stimulates the transcription of various genes by recognizing and binding to a CCAAT motif in promoters. May act through association with MADS-box proteins. May regulate the expression of genes involved in flowering. In Oryza sativa subsp. japonica (Rice), this protein is Nuclear transcription factor Y subunit B-1 (NFYB1).